A 432-amino-acid chain; its full sequence is Adenylosuccinate synthetase 2 (432 aa).

Residues 13–19 (GDEGKGK) and 41–43 (GHT) contribute to the GTP site. Asp-14 serves as the catalytic Proton acceptor. The Mg(2+) site is built by Asp-14 and Gly-41. IMP-binding positions include 14–17 (DEGK), 39–42 (NAGH), Thr-130, Arg-144, Gln-225, Thr-240, and Arg-304. Catalysis depends on His-42, which acts as the Proton donor. Residue 300-306 (ATTGRSR) participates in substrate binding. GTP contacts are provided by residues Arg-306, 332–334 (KLD), and 415–417 (STG).

It belongs to the adenylosuccinate synthetase family. As to quaternary structure, homodimer. Requires Mg(2+) as cofactor.

The protein localises to the cytoplasm. It catalyses the reaction IMP + L-aspartate + GTP = N(6)-(1,2-dicarboxyethyl)-AMP + GDP + phosphate + 2 H(+). It functions in the pathway purine metabolism; AMP biosynthesis via de novo pathway; AMP from IMP: step 1/2. Its function is as follows. Plays an important role in the de novo pathway of purine nucleotide biosynthesis. Catalyzes the first committed step in the biosynthesis of AMP from IMP. In Photorhabdus laumondii subsp. laumondii (strain DSM 15139 / CIP 105565 / TT01) (Photorhabdus luminescens subsp. laumondii), this protein is Adenylosuccinate synthetase 2.